Reading from the N-terminus, the 925-residue chain is Colossin-D (925 aa).

A signal peptide spans 1 to 26 (MIKVFKDLKFLILITIILLNLKSINC). 11 N-linked (GlcNAc...) asparagine glycosylation sites follow: N47, N95, N142, N166, N283, N334, N344, N378, N401, N511, and N642.

This sequence belongs to the serine-aspartate repeat-containing protein (SDr) family.

The protein localises to the secreted. This is Colossin-D (colD) from Dictyostelium discoideum (Social amoeba).